Reading from the N-terminus, the 122-residue chain is Large ribosomal subunit protein uL14 (122 aa).

The protein belongs to the universal ribosomal protein uL14 family. As to quaternary structure, part of the 50S ribosomal subunit. Forms a cluster with proteins L3 and L19. In the 70S ribosome, L14 and L19 interact and together make contacts with the 16S rRNA in bridges B5 and B8.

In terms of biological role, binds to 23S rRNA. Forms part of two intersubunit bridges in the 70S ribosome. This is Large ribosomal subunit protein uL14 from Bdellovibrio bacteriovorus (strain ATCC 15356 / DSM 50701 / NCIMB 9529 / HD100).